Consider the following 233-residue polypeptide: Small ribosomal subunit protein uS3 (233 aa).

A KH type-2 domain is found at 39-107 (VRQFLMKTLE…PVQINISEVR (69 aa)).

It belongs to the universal ribosomal protein uS3 family. Part of the 30S ribosomal subunit. Forms a tight complex with proteins S10 and S14.

Its function is as follows. Binds the lower part of the 30S subunit head. Binds mRNA in the 70S ribosome, positioning it for translation. The polypeptide is Small ribosomal subunit protein uS3 (Buchnera aphidicola subsp. Acyrthosiphon pisum (strain 5A)).